A 217-amino-acid polypeptide reads, in one-letter code: tRNA (guanine-N(7)-)-methyltransferase (217 aa).

Residues glutamate 43, aspartate 68, asparagine 101, and asparagine 123 each coordinate S-adenosyl-L-methionine. Lysine 127 contributes to the substrate binding site. Residues 129 to 134 form an interaction with RNA region; sequence RHNKRR. Residues aspartate 159 and 196-199 contribute to the substrate site; that span reads TEYE.

The protein belongs to the class I-like SAM-binding methyltransferase superfamily. TrmB family.

The catalysed reaction is guanosine(46) in tRNA + S-adenosyl-L-methionine = N(7)-methylguanosine(46) in tRNA + S-adenosyl-L-homocysteine. Its pathway is tRNA modification; N(7)-methylguanine-tRNA biosynthesis. Functionally, catalyzes the formation of N(7)-methylguanine at position 46 (m7G46) in tRNA. This is tRNA (guanine-N(7)-)-methyltransferase from Clostridium botulinum (strain Langeland / NCTC 10281 / Type F).